A 310-amino-acid polypeptide reads, in one-letter code: Putative dihydroorotate dehydrogenase A (fumarate) (310 aa).

Substrate-binding positions include lysine 45, 69–73 (NSMGL), and asparagine 128. An FMN-binding site is contributed by 45–46 (KT). Asparagine 128 provides a ligand contact to FMN. Residue cysteine 131 is the Nucleophile of the active site. The FMN site is built by lysine 165 and valine 193. A substrate-binding site is contributed by 194 to 195 (NS). FMN contacts are provided by residues glycine 220, 248 to 249 (GG), and 270 to 271 (GT).

The protein belongs to the dihydroorotate dehydrogenase family. Type 1 subfamily. As to quaternary structure, homodimer. It depends on FMN as a cofactor.

The protein localises to the cytoplasm. It catalyses the reaction (S)-dihydroorotate + fumarate = orotate + succinate. It functions in the pathway pyrimidine metabolism; UMP biosynthesis via de novo pathway. In terms of biological role, catalyzes the conversion of dihydroorotate to orotate with fumarate as the electron acceptor. The polypeptide is Putative dihydroorotate dehydrogenase A (fumarate) (pyrD) (Streptococcus agalactiae serotype Ia (strain ATCC 27591 / A909 / CDC SS700)).